We begin with the raw amino-acid sequence, 794 residues long: Ribonucleoside-diphosphate reductase large subunit (794 aa).

Positions 1-92 constitute an ATP-cone domain; sequence MHVIKRDGGQ…VSNLHKETKK (92 aa). Residues 5–6, 11–17, Thr53, and Asp57 each bind ATP; these read KR and EGVMFDK. The GDP site is built by Ser202 and Ser217. Cys218 and Cys444 form a disulfide bridge. Residues 226–228, Lys243, Arg256, and 263–264 each bind dTTP; these read DSI and AG. Asn427 is a binding site for GDP. Asn427 functions as the Proton acceptor in the catalytic mechanism. Cys429 functions as the Cysteine radical intermediate in the catalytic mechanism. GDP-binding positions include Glu431 and 604–607; that span reads TAST. Glu431 functions as the Proton acceptor in the catalytic mechanism.

Belongs to the ribonucleoside diphosphate reductase large chain family. As to quaternary structure, heterodimer of a large and a small subunit.

It is found in the cytoplasm. It catalyses the reaction a 2'-deoxyribonucleoside 5'-diphosphate + [thioredoxin]-disulfide + H2O = a ribonucleoside 5'-diphosphate + [thioredoxin]-dithiol. Its activity is regulated as follows. Under complex allosteric control mediated by deoxynucleoside triphosphates and ATP binding to separate specificity and activation sites on the M1 subunit. The type of nucleotide bound at the specificity site determines substrate preference. It seems probable that ATP makes the enzyme reduce CDP and UDP, dGTP favors ADP reduction and dTTP favors GDP reduction. Stimulated by ATP and inhibited by dATP binding to the activity site. Its function is as follows. Provides the precursors necessary for DNA synthesis. Catalyzes the biosynthesis of deoxyribonucleotides from the corresponding ribonucleotides. The protein is Ribonucleoside-diphosphate reductase large subunit (rrm1) of Danio rerio (Zebrafish).